A 431-amino-acid chain; its full sequence is 3-phosphoshikimate 1-carboxyvinyltransferase (431 aa).

Positions 26, 27, and 31 each coordinate 3-phosphoshikimate. Lysine 26 lines the phosphoenolpyruvate pocket. 2 residues coordinate phosphoenolpyruvate: glycine 99 and arginine 127. 3-phosphoshikimate contacts are provided by serine 170, serine 171, glutamine 172, serine 199, glutamate 314, and histidine 343. Phosphoenolpyruvate is bound at residue glutamine 172. Catalysis depends on glutamate 314, which acts as the Proton acceptor. Residues arginine 347, arginine 388, and lysine 413 each contribute to the phosphoenolpyruvate site.

The protein belongs to the EPSP synthase family. As to quaternary structure, monomer.

It is found in the cytoplasm. It catalyses the reaction 3-phosphoshikimate + phosphoenolpyruvate = 5-O-(1-carboxyvinyl)-3-phosphoshikimate + phosphate. It functions in the pathway metabolic intermediate biosynthesis; chorismate biosynthesis; chorismate from D-erythrose 4-phosphate and phosphoenolpyruvate: step 6/7. Its function is as follows. Catalyzes the transfer of the enolpyruvyl moiety of phosphoenolpyruvate (PEP) to the 5-hydroxyl of shikimate-3-phosphate (S3P) to produce enolpyruvyl shikimate-3-phosphate and inorganic phosphate. This is 3-phosphoshikimate 1-carboxyvinyltransferase from Mycobacterium ulcerans (strain Agy99).